We begin with the raw amino-acid sequence, 67 residues long: Conotoxin Cal14.2c (67 aa).

Positions 1–20 (MNVTVMFLVLLLLTMPLTDG) are cleaved as a signal peptide. Residues 21–48 (FNIRATNGGELFGPVQRDAGNVLDHGFQ) constitute a propeptide that is removed on maturation.

The protein belongs to the conotoxin L superfamily. Contains 2 disulfide bonds. Expressed by the venom duct.

The protein resides in the secreted. Functionally, probable neurotoxin with unknown target. Possibly targets ion channels. The sequence is that of Conotoxin Cal14.2c from Californiconus californicus (California cone).